Consider the following 184-residue polypeptide: Cyclin-dependent kinase inhibitor 1 (184 aa).

Positions 85–98 (ISSTTLTPLSSPST) are enriched in low complexity. Residues 85 to 184 (ISSTTLTPLS…IRTRSSCSPY (100 aa)) form a disordered region.

This sequence belongs to the CDI family. As to quaternary structure, interacts with cyd-1; the interaction is direct. As to expression, in embryos, expression is first seen in pharyngeal primordium and later in all differentiating cells. Post embryonic expression corresponds to developmental patterns of cell cycle progression in many tissues including sex myoblasts, distal tip cells, vulval cells, seam cells, neurons, intestine cells and hypodermal cells.

The protein localises to the nucleus. Functionally, negative cell-cycle regulator that functions at the G1-to-S-phase transition. Required for suspension of the cell cycle in dauer larvae and starved L1 larvae. In vulval precursor cells (VPCs), a pathway of heterochronic genes acts via cki-1 to maintain VPCs in G1 during the L2 larval stage. Cul-2 may function in ubiquitin-mediated degradation by targeting cki-1 for degradation. Involved in distal tip cell development by repressing and modulating cye-1/cdk-2 activity levels in Z1.aa/Z4.pp and in Z1.ap/Z4.pa. The polypeptide is Cyclin-dependent kinase inhibitor 1 (Caenorhabditis elegans).